A 273-amino-acid chain; its full sequence is Gamma-glutamyl cyclotransferase aclK (273 aa).

It belongs to the class-I pyridoxal-phosphate-dependent aminotransferase family.

It carries out the reaction an alpha-(gamma-L-glutamyl)-L-amino acid = 5-oxo-L-proline + an L-alpha-amino acid. It functions in the pathway mycotoxin biosynthesis. Functionally, gamma-glutamyl cyclotransferase; part of the gene cluster that mediates the biosynthesis of aspirochlorine (or antibiotic A30641), an unusual halogenated spiro compound with distinctive antifungal properties due to selective inhibition of protein biosynthesis, and which is also active against bacteria, viruses, and murine tumor cells. The non-ribosomal peptide synthetase (NRPS) aclP is responsible the formation of the diketopiperazine (DKP) core from the condensation of 2 phenylalanine residues. One Phe residue is tailored into chlorotyrosine by hydroxylation and chlorination, whereas the second Phe undergoes an unprecedented C-C bond cleavage to be converted into glycine. After formation of the DKP, sulfur is incorporated into the DKP by conjugation with glutathione by aclG, followed by its stepwise degradation to the thiol by aclI, aclJ and aclK, and the dithiol oxidation by aclT. In addition, oxygenases (aclB, aclC, aclL and aclO) and O-methyltransferases (aclM and aclU) act as tailoring enzymes to produce the intermediate dechloroaspirochlorine. Ultimately, chlorination of dechloroaspirochlorine by the halogenase aclH is the last step in the aspirochlorine pathway. This is Gamma-glutamyl cyclotransferase aclK from Aspergillus oryzae (strain ATCC 42149 / RIB 40) (Yellow koji mold).